Reading from the N-terminus, the 338-residue chain is Ferredoxin--NADP reductase (338 aa).

The FAD site is built by D35, Q43, Y48, A88, F122, D289, and T330.

The protein belongs to the ferredoxin--NADP reductase type 2 family. Homodimer. FAD is required as a cofactor.

It carries out the reaction 2 reduced [2Fe-2S]-[ferredoxin] + NADP(+) + H(+) = 2 oxidized [2Fe-2S]-[ferredoxin] + NADPH. This chain is Ferredoxin--NADP reductase, found in Ehrlichia canis (strain Jake).